We begin with the raw amino-acid sequence, 182 residues long: Ribosome maturation factor RimM (182 aa).

A PRC barrel domain is found at 102–182 (EEGDYYWKDL…TIEVDWDPGF (81 aa)).

The protein belongs to the RimM family. As to quaternary structure, binds ribosomal protein uS19.

The protein resides in the cytoplasm. In terms of biological role, an accessory protein needed during the final step in the assembly of 30S ribosomal subunit, possibly for assembly of the head region. Essential for efficient processing of 16S rRNA. May be needed both before and after RbfA during the maturation of 16S rRNA. It has affinity for free ribosomal 30S subunits but not for 70S ribosomes. The protein is Ribosome maturation factor RimM of Salmonella enteritidis PT4 (strain P125109).